We begin with the raw amino-acid sequence, 370 residues long: Uroporphyrinogen decarboxylase (370 aa).

Substrate-binding positions include 29-33, aspartate 79, tyrosine 155, serine 210, and histidine 342; that span reads RQAGR.

It belongs to the uroporphyrinogen decarboxylase family. Homodimer.

Its subcellular location is the cytoplasm. The enzyme catalyses uroporphyrinogen III + 4 H(+) = coproporphyrinogen III + 4 CO2. It participates in porphyrin-containing compound metabolism; protoporphyrin-IX biosynthesis; coproporphyrinogen-III from 5-aminolevulinate: step 4/4. Functionally, catalyzes the decarboxylation of four acetate groups of uroporphyrinogen-III to yield coproporphyrinogen-III. This Delftia acidovorans (strain DSM 14801 / SPH-1) protein is Uroporphyrinogen decarboxylase.